The sequence spans 86 residues: Toxin Cn1 (86 aa).

Positions 1-19 (MNSLLMITACFVLIGTVWA) are cleaved as a signal peptide. The LCN-type CS-alpha/beta domain maps to 20 to 84 (KDGYLVDAKG…TWPLPNKTCS (65 aa)). Cystine bridges form between cysteine 30–cysteine 83, cysteine 34–cysteine 59, cysteine 43–cysteine 64, and cysteine 47–cysteine 66. The residue at position 84 (serine 84) is a Serine amide.

This sequence belongs to the long (4 C-C) scorpion toxin superfamily. Sodium channel inhibitor family. Beta subfamily. As to expression, expressed by the venom gland.

It localises to the secreted. Functionally, beta toxins bind voltage-independently at site-4 of sodium channels (Nav) and shift the voltage of activation toward more negative potentials thereby affecting sodium channel activation and promoting spontaneous and repetitive firing. The protein is Toxin Cn1 of Centruroides noxius (Mexican scorpion).